Reading from the N-terminus, the 134-residue chain is D-ribose pyranase (134 aa).

Histidine 20 serves as the catalytic Proton donor. Substrate is bound by residues aspartate 28, histidine 101, and 123 to 125; that span reads YSN.

It belongs to the RbsD / FucU family. RbsD subfamily. Homodecamer.

It is found in the cytoplasm. The enzyme catalyses beta-D-ribopyranose = beta-D-ribofuranose. Its pathway is carbohydrate metabolism; D-ribose degradation; D-ribose 5-phosphate from beta-D-ribopyranose: step 1/2. Functionally, catalyzes the interconversion of beta-pyran and beta-furan forms of D-ribose. This chain is D-ribose pyranase, found in Pseudomonas syringae pv. tomato (strain ATCC BAA-871 / DC3000).